A 219-amino-acid chain; its full sequence is 2,3-bisphosphoglycerate-dependent phosphoglycerate mutase 2 (219 aa).

Residues 8–15 (RHGQSIWN), 21–22 (TG), arginine 58, 85–88 (ERHY), lysine 96, 112–113 (RR), and 156–157 (GN) contribute to the substrate site. Histidine 9 acts as the Tele-phosphohistidine intermediate in catalysis. Glutamate 85 (proton donor/acceptor) is an active-site residue.

This sequence belongs to the phosphoglycerate mutase family. BPG-dependent PGAM subfamily.

The catalysed reaction is (2R)-2-phosphoglycerate = (2R)-3-phosphoglycerate. It functions in the pathway carbohydrate degradation; glycolysis; pyruvate from D-glyceraldehyde 3-phosphate: step 3/5. Catalyzes the interconversion of 2-phosphoglycerate and 3-phosphoglycerate. This Gloeobacter violaceus (strain ATCC 29082 / PCC 7421) protein is 2,3-bisphosphoglycerate-dependent phosphoglycerate mutase 2.